Reading from the N-terminus, the 373-residue chain is Flagellar P-ring protein (373 aa).

The signal sequence occupies residues 1-28 (MPRVSTHLVKLAAAALCALLLSAVAASA).

It belongs to the FlgI family. As to quaternary structure, the basal body constitutes a major portion of the flagellar organelle and consists of four rings (L,P,S, and M) mounted on a central rod.

It is found in the periplasm. The protein resides in the bacterial flagellum basal body. Its function is as follows. Assembles around the rod to form the L-ring and probably protects the motor/basal body from shearing forces during rotation. The protein is Flagellar P-ring protein of Rhodopseudomonas palustris (strain ATCC BAA-98 / CGA009).